The sequence spans 303 residues: Uricase (303 aa).

Catalysis depends on charge relay system residues Lys-12 and Thr-60. The urate site is built by Thr-60, Asp-61, Phe-162, Arg-179, Val-234, Gln-235, and Asn-261. The active-site Charge relay system is the His-263. A Microbody targeting signal motif is present at residues 301–303 (TKL).

Belongs to the uricase family.

The protein localises to the peroxisome. It carries out the reaction urate + O2 + H2O = 5-hydroxyisourate + H2O2. Its pathway is purine metabolism; urate degradation; (S)-allantoin from urate: step 1/3. Functionally, catalyzes the oxidation of uric acid to 5-hydroxyisourate, which is further processed to form (S)-allantoin. This is Uricase from Cyberlindnera jadinii (Torula yeast).